The chain runs to 313 residues: Ribosomal protein L11 methyltransferase (313 aa).

S-adenosyl-L-methionine contacts are provided by Thr151, Gly172, Asp194, and Asn245.

It belongs to the methyltransferase superfamily. PrmA family.

The protein localises to the cytoplasm. The enzyme catalyses L-lysyl-[protein] + 3 S-adenosyl-L-methionine = N(6),N(6),N(6)-trimethyl-L-lysyl-[protein] + 3 S-adenosyl-L-homocysteine + 3 H(+). Methylates ribosomal protein L11. The polypeptide is Ribosomal protein L11 methyltransferase (Nitrosomonas europaea (strain ATCC 19718 / CIP 103999 / KCTC 2705 / NBRC 14298)).